Reading from the N-terminus, the 277-residue chain is Serine protease 33 (277 aa).

Residues M1 to A24 form the signal peptide. In terms of domain architecture, Peptidase S1 spans I34–S276. A disulfide bond links C59 and C75. Active-site charge relay system residues include H74 and D123. 3 cysteine pairs are disulfide-bonded: C157/C234, C190/C213, and C224/C252. The active-site Charge relay system is S228.

The protein belongs to the peptidase S1 family. Post-translationally, not glycosylated. Widely expressed.

It is found in the secreted. Serine protease that has amidolytic activity, cleaving its substrates before Arg residues. The sequence is that of Serine protease 33 (Prss33) from Mus musculus (Mouse).